We begin with the raw amino-acid sequence, 1191 residues long: Zinc finger protein ush (1191 aa).

Disordered stretches follow at residues methionine 1–proline 153 and proline 169–alanine 194. The span at valine 19–serine 28 shows a compositional bias: basic and acidic residues. A compositionally biased stretch (acidic residues) spans isoleucine 61–glutamate 73. Phosphoserine is present on residues serine 116 and serine 118. Residues alanine 130–lysine 151 are compositionally biased toward pro residues. The CCHC FOG-type 1 zinc-finger motif lies at leucine 202–isoleucine 235. Positions 210, 213, 226, and 231 each coordinate Zn(2+). A disordered region spans residues aspartate 239 to arginine 274. Over residues threonine 254–threonine 266 the composition is skewed to low complexity. The C2H2-type 1 zinc-finger motif lies at tyrosine 279–histidine 301. Residues serine 304–glutamine 338 form a disordered region. The CCHC FOG-type 2 zinc finger occupies serine 335–arginine 368. The Zn(2+) site is built by cysteine 343, cysteine 346, histidine 359, and cysteine 364. 3 disordered regions span residues glutamine 361–lysine 413, glutamate 504–proline 540, and alanine 601–proline 635. The segment covering alanine 383–isoleucine 394 has biased composition (gly residues). 3 stretches are compositionally biased toward low complexity: residues serine 509–serine 523, proline 602–serine 613, and serine 620–proline 635. 2 CCHC FOG-type zinc fingers span residues tyrosine 720–serine 753 and proline 791–glycine 824. Residues cysteine 728, cysteine 731, histidine 744, cysteine 749, cysteine 799, cysteine 802, histidine 815, and cysteine 820 each coordinate Zn(2+). 3 C2H2-type zinc fingers span residues asparagine 882–valine 907, tyrosine 910–histidine 932, and phenylalanine 983–histidine 1006. Residues isoleucine 1011–threonine 1073 are disordered. 3 positions are modified to phosphoserine: serine 1013, serine 1015, and serine 1017. Residues valine 1025–serine 1040 show a composition bias toward polar residues. The CCHC FOG-type 5 zinc-finger motif lies at alanine 1113 to proline 1146. Zn(2+) is bound by residues cysteine 1121, cysteine 1124, histidine 1137, and cysteine 1142. Position 1156 is a phosphoserine (serine 1156).

It belongs to the FOG (Friend of GATA) family. Interacts with pnr, although weak this interaction is essential. Interacts with the isoform SrpNC of srp. Interacts with CtBP corepressor. As to expression, first expressed in stage 5 at high levels in the primordium of the amnioserosa. Also expressed in germ band extending embryos in cells of the developing anterior and posterior midgut and in hemocyte precursors present in the cephalic mesoderm. In embryonic stage 8, it is expressed in blood cell precursors. By stage 10, it is expressed in hemocyte precursors that have spread throughout the lateral and ventral head mesoderm. By stage 11, it is expressed in the dorsal ectoderm and in precursor cells of the hemocytes and fat body. As embryogenesis proceeds, it is also expressed in stage 13 plasmatocytes migrating throughout the head mesoderm and down the ventral midline. By late embryogenesis, expression strongly decreases but remains in the dorsal ectoderm during dorsal closure, in cells within, or associated with, the central nervous system, and in plasmatocytes circulating throughout the embryonic hemolymph. During larval development, it is expressed in primary and secondary lobes of lymph glands. Expressed in the dorsal part of the thoracic imaginal disk.

The protein localises to the nucleus. Functionally, transcription regulator that modulates expression mediated by transcription factors of the GATA family such as pnr and srp. Represses transcription of proneural achaete-scute complex (AS-C), which is usually activated by pnr. Involved in cardiogenesis, blood, and eye development. During hematopoiesis, it is required to restrict the number of crystal cells, probably via its interaction with the isoform SrpNC of srp. Negatively regulates expression of sr. Probably acts by interacting with the GATA-type zinc finger of proteins such as pnr and srp, possibly antagonizing the interaction between the GATA-type zinc finger and some cofactor. In Drosophila melanogaster (Fruit fly), this protein is Zinc finger protein ush (ush).